Here is an 80-residue protein sequence, read N- to C-terminus: NAD(P)H-quinone oxidoreductase subunit O (80 aa).

The protein belongs to the complex I NdhO subunit family. As to quaternary structure, NDH-1 can be composed of about 15 different subunits; different subcomplexes with different compositions have been identified which probably have different functions.

The protein resides in the cellular thylakoid membrane. The catalysed reaction is a plastoquinone + NADH + (n+1) H(+)(in) = a plastoquinol + NAD(+) + n H(+)(out). It catalyses the reaction a plastoquinone + NADPH + (n+1) H(+)(in) = a plastoquinol + NADP(+) + n H(+)(out). In terms of biological role, NDH-1 shuttles electrons from an unknown electron donor, via FMN and iron-sulfur (Fe-S) centers, to quinones in the respiratory and/or the photosynthetic chain. The immediate electron acceptor for the enzyme in this species is believed to be plastoquinone. Couples the redox reaction to proton translocation, and thus conserves the redox energy in a proton gradient. Cyanobacterial NDH-1 also plays a role in inorganic carbon-concentration. This is NAD(P)H-quinone oxidoreductase subunit O from Prochlorococcus marinus (strain MIT 9515).